The chain runs to 484 residues: Nuclear rim protein 1 (484 aa).

S3 bears the Phosphoserine mark. 2 helical membrane passes run 145–165 (FTIF…MFGY) and 237–257 (IPTN…IVFL). The tract at residues 416–457 (SSNENLEKGGAFLPNQDQNRPSKSLSPLRKTPLSARQKRFEG) is disordered. Position 417 is a phosphoserine (S417). The span at 430–440 (NQDQNRPSKSL) shows a compositional bias: polar residues. S474 carries the phosphoserine modification.

This sequence belongs to the NUR1 family. Interacts with CSM1.

Its subcellular location is the nucleus membrane. Member of a perinuclear network that controls recombination at multiple loci to maintain genome stability. Required for rDNA repeat stability. The protein is Nuclear rim protein 1 (NUR1) of Saccharomyces cerevisiae (strain JAY291) (Baker's yeast).